The chain runs to 304 residues: Glycine--tRNA ligase alpha subunit (304 aa).

Belongs to the class-II aminoacyl-tRNA synthetase family. As to quaternary structure, tetramer of two alpha and two beta subunits.

It is found in the cytoplasm. It carries out the reaction tRNA(Gly) + glycine + ATP = glycyl-tRNA(Gly) + AMP + diphosphate. This is Glycine--tRNA ligase alpha subunit from Serratia proteamaculans (strain 568).